We begin with the raw amino-acid sequence, 130 residues long: MSATQNYGTGRRKTATARVFLRPGTGNISINNRSLDVFFGRETARMVVRQPLELTETVEKFDIYVTVSGGGVSGQAGAIRHGITRALMEYDETLRGALRRAGYVTRDAREVERKKVGLRKARKRPQYSKR.

The protein belongs to the universal ribosomal protein uS9 family.

The sequence is that of Small ribosomal subunit protein uS9 from Pseudomonas entomophila (strain L48).